We begin with the raw amino-acid sequence, 295 residues long: Nucleotide-binding protein RBAM_031990 (295 aa).

16-23 provides a ligand contact to ATP; sequence GMSGAGKT. 67–70 serves as a coordination point for GTP; it reads DLRG.

This sequence belongs to the RapZ-like family.

Functionally, displays ATPase and GTPase activities. This chain is Nucleotide-binding protein RBAM_031990, found in Bacillus velezensis (strain DSM 23117 / BGSC 10A6 / LMG 26770 / FZB42) (Bacillus amyloliquefaciens subsp. plantarum).